Reading from the N-terminus, the 331-residue chain is Glyceraldehyde-3-phosphate dehydrogenase (331 aa).

NAD(+) is bound by residues 12 to 13 (RI), Asp-34, Arg-78, and Thr-120. Residues 149–151 (SCT), Thr-180, 209–210 (TG), and Arg-232 each bind D-glyceraldehyde 3-phosphate. The Nucleophile role is filled by Cys-150. An NAD(+)-binding site is contributed by Asn-314.

It belongs to the glyceraldehyde-3-phosphate dehydrogenase family. Homotetramer.

Its subcellular location is the cytoplasm. It carries out the reaction D-glyceraldehyde 3-phosphate + phosphate + NAD(+) = (2R)-3-phospho-glyceroyl phosphate + NADH + H(+). It participates in carbohydrate degradation; glycolysis; pyruvate from D-glyceraldehyde 3-phosphate: step 1/5. Catalyzes the oxidative phosphorylation of glyceraldehyde 3-phosphate (G3P) to 1,3-bisphosphoglycerate (BPG) using the cofactor NAD. The first reaction step involves the formation of a hemiacetal intermediate between G3P and a cysteine residue, and this hemiacetal intermediate is then oxidized to a thioester, with concomitant reduction of NAD to NADH. The reduced NADH is then exchanged with the second NAD, and the thioester is attacked by a nucleophilic inorganic phosphate to produce BPG. The polypeptide is Glyceraldehyde-3-phosphate dehydrogenase (gapA) (Escherichia fergusonii (strain ATCC 35469 / DSM 13698 / CCUG 18766 / IAM 14443 / JCM 21226 / LMG 7866 / NBRC 102419 / NCTC 12128 / CDC 0568-73)).